Reading from the N-terminus, the 298-residue chain is UPF0696 protein C11orf68 homolog (298 aa).

The span at 1–10 shows a compositional bias: low complexity; it reads MAAAAAAVAG. The interval 1–66 is disordered; that stretch reads MAAAAAAVAG…EDSPGGREDG (66 aa). The span at 11–25 shows a compositional bias: gly residues; sequence AGRGGGGGGGGGGAA. Basic and acidic residues predominate over residues 41 to 50; that stretch reads ERSEGRRMEP.

Belongs to the UPF0696 family.

This chain is UPF0696 protein C11orf68 homolog (Bles03), found in Mus musculus (Mouse).